The following is a 508-amino-acid chain: Photosystem II CP47 reaction center protein (508 aa).

Transmembrane regions (helical) follow at residues A21–S36, I101–W115, G140–F156, I203–S218, V237–V252, and C457–R472.

This sequence belongs to the PsbB/PsbC family. PsbB subfamily. PSII is composed of 1 copy each of membrane proteins PsbA, PsbB, PsbC, PsbD, PsbE, PsbF, PsbH, PsbI, PsbJ, PsbK, PsbL, PsbM, PsbT, PsbX, PsbY, PsbZ, Psb30/Ycf12, at least 3 peripheral proteins of the oxygen-evolving complex and a large number of cofactors. It forms dimeric complexes. It depends on Binds multiple chlorophylls. PSII binds additional chlorophylls, carotenoids and specific lipids. as a cofactor.

It is found in the plastid. The protein resides in the chloroplast thylakoid membrane. Its function is as follows. One of the components of the core complex of photosystem II (PSII). It binds chlorophyll and helps catalyze the primary light-induced photochemical processes of PSII. PSII is a light-driven water:plastoquinone oxidoreductase, using light energy to abstract electrons from H(2)O, generating O(2) and a proton gradient subsequently used for ATP formation. The chain is Photosystem II CP47 reaction center protein from Zygnema circumcarinatum (Green alga).